A 183-amino-acid polypeptide reads, in one-letter code: Inosine/xanthosine triphosphatase (183 aa).

Belongs to the YjjX NTPase family. In terms of assembly, homodimer. The cofactor is Mg(2+). Requires Mn(2+) as cofactor.

It catalyses the reaction XTP + H2O = XDP + phosphate + H(+). The catalysed reaction is ITP + H2O = IDP + phosphate + H(+). Phosphatase that hydrolyzes non-canonical purine nucleotides such as XTP and ITP to their respective diphosphate derivatives. Probably excludes non-canonical purines from DNA/RNA precursor pool, thus preventing their incorporation into DNA/RNA and avoiding chromosomal lesions. The protein is Inosine/xanthosine triphosphatase of Vibrio cholerae serotype O1 (strain ATCC 39315 / El Tor Inaba N16961).